We begin with the raw amino-acid sequence, 92 residues long: Precursor of elicitor peptide 1 (92 aa).

Positions 1-69 (MEKSDRRSEE…EKEEVVVTSR (69 aa)) are excised as a propeptide. Positions 35–92 (HQDSPTTSSPGTSKQPKEEKEDVTMEKEEVVVTSRATKVKAKQRGKEKVSSGRPGQHN) are disordered. The span at 37 to 48 (DSPTTSSPGTSK) shows a compositional bias: polar residues. Positions 49–64 (QPKEEKEDVTMEKEEV) are enriched in basic and acidic residues.

The protein belongs to the brassicaceae elicitor peptide family. In terms of assembly, interacts with its receptor PEPR1.

Its function is as follows. Elicitor of plant defense. Induces the production of plant defensin (PDF1.2) and of H(2)O(2). Promotes resistance to the root fungal pathogen P.irregulare. Triggers the expression of several PROSCOOP genes (e.g. PROSCOOP2, PROSCOOP7, PROSCOOP8, PROSCOOP12 and PROSCOOP13). This is Precursor of elicitor peptide 1 from Arabidopsis thaliana (Mouse-ear cress).